We begin with the raw amino-acid sequence, 316 residues long: Transaldolase (316 aa).

Catalysis depends on Lys132, which acts as the Schiff-base intermediate with substrate.

The protein belongs to the transaldolase family. Type 1 subfamily. Homodimer.

It localises to the cytoplasm. The catalysed reaction is D-sedoheptulose 7-phosphate + D-glyceraldehyde 3-phosphate = D-erythrose 4-phosphate + beta-D-fructose 6-phosphate. Its pathway is carbohydrate degradation; pentose phosphate pathway; D-glyceraldehyde 3-phosphate and beta-D-fructose 6-phosphate from D-ribose 5-phosphate and D-xylulose 5-phosphate (non-oxidative stage): step 2/3. In terms of biological role, transaldolase is important for the balance of metabolites in the pentose-phosphate pathway. The polypeptide is Transaldolase (Vibrio vulnificus (strain YJ016)).